The chain runs to 266 residues: Undecaprenyl-diphosphatase (266 aa).

The next 8 membrane-spanning stretches (helical) occupy residues 2–22 (INIL…FLPI), 39–59 (LPII…IIYY), 86–106 (LKLI…GTFI), 112–132 (MFIL…ILML), 145–165 (ILLV…PGIS), 184–204 (AFEI…LFKY), 212–232 (MVLN…VGII), and 246–266 (LYYF…FFRI).

It belongs to the UppP family.

The protein localises to the cell inner membrane. The catalysed reaction is di-trans,octa-cis-undecaprenyl diphosphate + H2O = di-trans,octa-cis-undecaprenyl phosphate + phosphate + H(+). In terms of biological role, catalyzes the dephosphorylation of undecaprenyl diphosphate (UPP). Confers resistance to bacitracin. The chain is Undecaprenyl-diphosphatase from Borrelia garinii subsp. bavariensis (strain ATCC BAA-2496 / DSM 23469 / PBi) (Borreliella bavariensis).